We begin with the raw amino-acid sequence, 356 residues long: MASIAILGGGAWGTALAASLTVNGHTVMLWARRRQTCDAINARNENVQYLPGITLPAALCASPDMAYVCAGADLIVLAVPSCYLAEVAALMNTTPRFQRLRTAAVGQEYPLIGILTKGFIPDQEGMPHLITDALGALLPSGAHGQLVYISGPSHAQEVAQGKVTGLIAASQNPMAAIRVRELLRSKRVQVYSSLDVVGVQVCAAVKNVIAIAFGLLDAMAEHSEAFGDNTESMLLAAGLNEIQTIGKQLGSTHPETFTSLAGIGDLDVTCRSAYGRNRRFGRDIVHKGILDSFSGIQDLVSRLPEVGYLAEGVVACMHVQRLAERDRLKVPICAGLYAILNREKGADTFMQEILGW.

The NADPH site is built by tryptophan 12, arginine 32, arginine 33, and lysine 117. Sn-glycerol 3-phosphate-binding residues include lysine 117, glycine 151, and serine 153. Alanine 155 is an NADPH binding site. 4 residues coordinate sn-glycerol 3-phosphate: lysine 206, aspartate 265, arginine 276, and asparagine 277. The Proton acceptor role is filled by lysine 206. Position 276 (arginine 276) interacts with NADPH. Residues leucine 309 and glutamate 311 each coordinate NADPH.

Belongs to the NAD-dependent glycerol-3-phosphate dehydrogenase family.

The protein localises to the cytoplasm. It catalyses the reaction sn-glycerol 3-phosphate + NAD(+) = dihydroxyacetone phosphate + NADH + H(+). The enzyme catalyses sn-glycerol 3-phosphate + NADP(+) = dihydroxyacetone phosphate + NADPH + H(+). The protein operates within membrane lipid metabolism; glycerophospholipid metabolism. Functionally, catalyzes the reduction of the glycolytic intermediate dihydroxyacetone phosphate (DHAP) to sn-glycerol 3-phosphate (G3P), the key precursor for phospholipid synthesis. The protein is Glycerol-3-phosphate dehydrogenase [NAD(P)+] of Treponema pallidum (strain Nichols).